Reading from the N-terminus, the 174-residue chain is Eukaryotic translation elongation factor 1 epsilon-1 (174 aa).

N-acetylalanine is present on Ala-2. The segment at 2–56 (AAAAELSLLEKSLGLSKGNKYSAQGERQIPVLQTNNGPSLTGLTTIAAHLVKQAN) is N-terminal. Residues 50 to 173 (HLVKQANKEY…FIKNRLYTNS (124 aa)) enclose the GST C-terminal domain. A linker region spans residues 57–63 (KEYLLGS). The segment at 64 to 152 (TAEEKAIVQQ…SRWFCHIQHY (89 aa)) is C-terminal. Lys-138 carries the post-translational modification N6-acetyllysine. Residues 153–169 (PGIRQHLSSVVFIKNRL) adopt a coiled-coil conformation.

As to quaternary structure, part of a multisubunit complex that groups tRNA ligases for Arg (RARS1), Asp (DARS1), Gln (QARS1), Ile (IARS1), Leu (LARS1), Lys (KARS1), Met (MARS1) the bifunctional ligase for Glu and Pro (EPRS1) and the auxiliary subunits AIMP1/p43, AIMP2/p38 and EEF1E1/p18. Can interact simultaneously with MARS1 and EPRS1. Forms a linear complex that contains MARS1, EEF1E1, EPRS1 and AIMP2 that is at the core of the multisubunit complex. Interacts with ATM and ATR. The interaction with ATM, which takes place independently of TP53, is induced by DNA damage that may occur during genotoxic stress or cell growth. The interaction with ATR is enhanced by UV irradiation. In terms of tissue distribution, down-regulated in various cancer tissues.

It localises to the cytoplasm. The protein localises to the cytosol. The protein resides in the nucleus. Functionally, positive modulator of ATM response to DNA damage. The protein is Eukaryotic translation elongation factor 1 epsilon-1 (EEF1E1) of Homo sapiens (Human).